The primary structure comprises 323 residues: Beta-ketoacyl-[acyl-carrier-protein] synthase III (323 aa).

Active-site residues include Cys-112 and His-250. Residues 251–255 (QANQR) form an ACP-binding region. Asn-280 is a catalytic residue.

This sequence belongs to the thiolase-like superfamily. FabH family. In terms of assembly, homodimer.

The protein localises to the cytoplasm. It carries out the reaction malonyl-[ACP] + acetyl-CoA + H(+) = 3-oxobutanoyl-[ACP] + CO2 + CoA. Its pathway is lipid metabolism; fatty acid biosynthesis. Its function is as follows. Catalyzes the condensation reaction of fatty acid synthesis by the addition to an acyl acceptor of two carbons from malonyl-ACP. Catalyzes the first condensation reaction which initiates fatty acid synthesis and may therefore play a role in governing the total rate of fatty acid production. Possesses both acetoacetyl-ACP synthase and acetyl transacylase activities. Its substrate specificity determines the biosynthesis of branched-chain and/or straight-chain of fatty acids. In Oenococcus oeni (strain ATCC BAA-331 / PSU-1), this protein is Beta-ketoacyl-[acyl-carrier-protein] synthase III.